Reading from the N-terminus, the 163-residue chain is Single-stranded DNA-binding protein 2 (163 aa).

One can recognise an SSB domain in the interval 1–104; that stretch reads MINNVVLVGR…VVADNFQMLE (104 aa). The interval 109–163 is disordered; sequence REGGSTGSFNGGFNNNTSSSNSYSAPAQQTPNFGRDDSPFGNSNPMDISDDDLPF. The segment covering 119-130 has biased composition (low complexity); it reads GGFNNNTSSSNS. Residues 131-140 are compositionally biased toward polar residues; that stretch reads YSAPAQQTPN. Positions 158–163 match the Important for interaction with partner proteins motif; sequence DDDLPF.

Homotetramer.

Its function is as follows. Plays an important role in DNA replication, recombination and repair. Binds to ssDNA and to an array of partner proteins to recruit them to their sites of action during DNA metabolism. This chain is Single-stranded DNA-binding protein 2 (ssb2), found in Streptococcus pyogenes serotype M6 (strain ATCC BAA-946 / MGAS10394).